A 370-amino-acid polypeptide reads, in one-letter code: Dual-specificity RNA methyltransferase RlmN (370 aa).

Glu-93 serves as the catalytic Proton acceptor. The Radical SAM core domain maps to 99-337; sequence EEGRGTLCVS…VTTVRKTRGD (239 aa). Cys-106 and Cys-343 are joined by a disulfide. [4Fe-4S] cluster contacts are provided by Cys-113, Cys-117, and Cys-120. S-adenosyl-L-methionine-binding positions include 167–168, Ser-199, 221–223, and Asn-300; these read GE and SLH. Cys-343 serves as the catalytic S-methylcysteine intermediate.

This sequence belongs to the radical SAM superfamily. RlmN family. Requires [4Fe-4S] cluster as cofactor.

It is found in the cytoplasm. It catalyses the reaction adenosine(2503) in 23S rRNA + 2 reduced [2Fe-2S]-[ferredoxin] + 2 S-adenosyl-L-methionine = 2-methyladenosine(2503) in 23S rRNA + 5'-deoxyadenosine + L-methionine + 2 oxidized [2Fe-2S]-[ferredoxin] + S-adenosyl-L-homocysteine. The enzyme catalyses adenosine(37) in tRNA + 2 reduced [2Fe-2S]-[ferredoxin] + 2 S-adenosyl-L-methionine = 2-methyladenosine(37) in tRNA + 5'-deoxyadenosine + L-methionine + 2 oxidized [2Fe-2S]-[ferredoxin] + S-adenosyl-L-homocysteine. Its function is as follows. Specifically methylates position 2 of adenine 2503 in 23S rRNA and position 2 of adenine 37 in tRNAs. m2A2503 modification seems to play a crucial role in the proofreading step occurring at the peptidyl transferase center and thus would serve to optimize ribosomal fidelity. The chain is Dual-specificity RNA methyltransferase RlmN from Francisella tularensis subsp. mediasiatica (strain FSC147).